The following is a 207-amino-acid chain: Putative 3-methyladenine DNA glycosylase (207 aa).

This sequence belongs to the DNA glycosylase MPG family.

This is Putative 3-methyladenine DNA glycosylase from Burkholderia lata (strain ATCC 17760 / DSM 23089 / LMG 22485 / NCIMB 9086 / R18194 / 383).